The following is a 455-amino-acid chain: uncharacterized protein (455 aa).

The segment covering M1 to S20 has biased composition (low complexity). 2 disordered regions span residues M1 to T234 and R258 to K304. Composition is skewed to basic and acidic residues over residues E35 to Q46, S61 to S75, R129 to D143, R156 to R166, and P173 to G186. Polar residues predominate over residues S213 to R224. Residues A260–A271 show a composition bias toward low complexity.

This is an uncharacterized protein from Arabidopsis thaliana (Mouse-ear cress).